A 110-amino-acid chain; its full sequence is Putative pterin-4-alpha-carbinolamine dehydratase (110 aa).

This sequence belongs to the pterin-4-alpha-carbinolamine dehydratase family.

The enzyme catalyses (4aS,6R)-4a-hydroxy-L-erythro-5,6,7,8-tetrahydrobiopterin = (6R)-L-erythro-6,7-dihydrobiopterin + H2O. The polypeptide is Putative pterin-4-alpha-carbinolamine dehydratase (Vibrio vulnificus (strain CMCP6)).